The chain runs to 672 residues: uncharacterized protein (672 aa).

Residues 1–24 (MKTLKTLKIFIIICIASVSLASFA) form the signal peptide. 6 helical membrane passes run 226–246 (IIGA…ALNK), 254–274 (IALF…LGPL), 410–430 (IILA…LYFI), 436–456 (CMIT…MALF), 469–489 (VCIS…LLIT), and 562–582 (VVSI…FYYF). Residues 626–672 (ASQGKPSVGDKPDVGGKRKEGEQQGGDSESGAGGGLADLASGSGGGK) are disordered. Positions 633–647 (VGDKPDVGGKRKEGE) are enriched in basic and acidic residues. Gly residues predominate over residues 656 to 672 (GAGGGLADLASGSGGGK).

It belongs to the TrbL/VirB6 family.

The protein localises to the cell membrane. This is an uncharacterized protein from Rickettsia felis (strain ATCC VR-1525 / URRWXCal2) (Rickettsia azadi).